The chain runs to 360 residues: Peptide chain release factor 1 (360 aa).

Gln235 carries the N5-methylglutamine modification. A compositionally biased stretch (basic and acidic residues) spans Gln284–Thr293. The interval Gln284–Asn311 is disordered.

The protein belongs to the prokaryotic/mitochondrial release factor family. Methylated by PrmC. Methylation increases the termination efficiency of RF1.

Its subcellular location is the cytoplasm. In terms of biological role, peptide chain release factor 1 directs the termination of translation in response to the peptide chain termination codons UAG and UAA. This Sodalis glossinidius (strain morsitans) protein is Peptide chain release factor 1.